A 326-amino-acid chain; its full sequence is MKLNILKLLNNNNNKNMLLKNMLLKMNINNNNMNTNNNNMKYMNNKLQSINNMNNWSLQMYNYNKNNELNMMMMMNMMNKLLYKLMNMIMINNMTMNVNNKNNNNIIMMKPMYQYMMNKLNIKFYYYINNNNMNTNYYMNMLYKLMNTLNNNNNMYMNNMNNIMSMYINKNINIEMIKLNYVYNNKDIMNKYLSTMDIDTLNNNSTMNLLNNMMTKMNNNNIIMNYMNNMNNMRNNKYINNMSSNYIMNMLMYKYLTGWTILLKGRLNKNMTRTNKYILYNGSNKMNMYMKNNYKLNYISNNHFINNINNVNKNGKYNIKVKLSYI.

The protein belongs to the universal ribosomal protein uS3 family.

The protein localises to the mitochondrion. Functionally, essential for mitochondrial protein synthesis and required for the maturation of small ribosomal subunits. The sequence is that of Small ribosomal subunit protein uS3m (VAR1) from Naumovozyma castellii (Yeast).